A 260-amino-acid polypeptide reads, in one-letter code: Global transcriptional regulator CodY (260 aa).

Residues 1–159 (MPNLLEKTRK…SSTVVGIQLL (159 aa)) form a GAF domain region. Residues 207–226 (ASVIADRIGITRSVIVNALR) constitute a DNA-binding region (H-T-H motif).

The protein belongs to the CodY family.

The protein localises to the cytoplasm. DNA-binding global transcriptional regulator which is involved in the adaptive response to starvation and acts by directly or indirectly controlling the expression of numerous genes in response to nutrient availability. During rapid exponential growth, CodY is highly active and represses genes whose products allow adaptation to nutrient depletion. The sequence is that of Global transcriptional regulator CodY from Streptococcus pyogenes serotype M3 (strain SSI-1).